A 319-amino-acid chain; its full sequence is tRNA uridine(34) hydroxylase (319 aa).

The Rhodanese domain maps to 124–218; that stretch reads LDEDTVILDA…YGKNEETKGE (95 aa). Catalysis depends on C178, which acts as the Cysteine persulfide intermediate.

This sequence belongs to the TrhO family.

It carries out the reaction uridine(34) in tRNA + AH2 + O2 = 5-hydroxyuridine(34) in tRNA + A + H2O. Functionally, catalyzes oxygen-dependent 5-hydroxyuridine (ho5U) modification at position 34 in tRNAs. The polypeptide is tRNA uridine(34) hydroxylase (Listeria welshimeri serovar 6b (strain ATCC 35897 / DSM 20650 / CCUG 15529 / CIP 8149 / NCTC 11857 / SLCC 5334 / V8)).